A 1404-amino-acid polypeptide reads, in one-letter code: DNA-directed RNA polymerase subunit beta' (1404 aa).

4 residues coordinate Zn(2+): Cys-70, Cys-72, Cys-85, and Cys-88. Mg(2+) is bound by residues Asp-460, Asp-462, and Asp-464. Zn(2+) is bound by residues Cys-825, Cys-899, Cys-906, and Cys-909.

It belongs to the RNA polymerase beta' chain family. In terms of assembly, the RNAP catalytic core consists of 2 alpha, 1 beta, 1 beta' and 1 omega subunit. When a sigma factor is associated with the core the holoenzyme is formed, which can initiate transcription. Requires Mg(2+) as cofactor. Zn(2+) serves as cofactor.

It catalyses the reaction RNA(n) + a ribonucleoside 5'-triphosphate = RNA(n+1) + diphosphate. Functionally, DNA-dependent RNA polymerase catalyzes the transcription of DNA into RNA using the four ribonucleoside triphosphates as substrates. This Nitrosomonas eutropha (strain DSM 101675 / C91 / Nm57) protein is DNA-directed RNA polymerase subunit beta'.